Reading from the N-terminus, the 327-residue chain is Endo-1,4-beta-xylanase C (327 aa).

Residues 1–15 (MKFSSLLFTASLVAA) form the signal peptide. The GH10 domain maps to 43–325 (TITDPNLLQS…KPAYTAVVNA (283 aa)). Glu154 functions as the Proton donor in the catalytic mechanism. Glu262 (nucleophile) is an active-site residue. The cysteines at positions 280 and 286 are disulfide-linked.

Belongs to the glycosyl hydrolase 10 (cellulase F) family.

The protein localises to the secreted. The enzyme catalyses Endohydrolysis of (1-&gt;4)-beta-D-xylosidic linkages in xylans.. Its pathway is glycan degradation; xylan degradation. Its activity is regulated as follows. Weakly inhibited by the wheat xylanase inhibiting protein I (XIP-I). Endo-1,4-beta-xylanase involved in the hydrolysis of xylan, a major structural heterogeneous polysaccharide found in plant biomass representing the second most abundant polysaccharide in the biosphere, after cellulose. Plays an important role in causing fusarium head blight (FHB) on cereal crops. This is Endo-1,4-beta-xylanase C (XYLC) from Gibberella zeae (strain ATCC MYA-4620 / CBS 123657 / FGSC 9075 / NRRL 31084 / PH-1) (Wheat head blight fungus).